Reading from the N-terminus, the 669-residue chain is NAD-dependent malic enzyme, mitochondrial (669 aa).

The segment covering 33–43 (IQQSRLYSSNT) has biased composition (polar residues). The interval 33-68 (IQQSRLYSSNTRSHKATTTRENTFQKPYSDEEVTKT) is disordered. Arginine 142 contributes to the fumarate binding site. The Proton donor role is filled by tyrosine 187. Lysine 259 serves as the catalytic Proton acceptor. A divalent metal cation contacts are provided by glutamate 330, aspartate 331, and aspartate 354. NAD(+) contacts are provided by alanine 387 and alanine 390. 2 residues coordinate (S)-malate: asparagine 499 and asparagine 539.

It belongs to the malic enzymes family. It depends on Mg(2+) as a cofactor. Mn(2+) is required as a cofactor.

It is found in the mitochondrion matrix. The catalysed reaction is (S)-malate + NAD(+) = pyruvate + CO2 + NADH. The enzyme catalyses oxaloacetate + H(+) = pyruvate + CO2. In terms of biological role, NAD-dependent mitochondrial malic enzyme that catalyzes the oxidative decarboxylation of malate to pyruvate. The protein is NAD-dependent malic enzyme, mitochondrial (MAE1) of Saccharomyces cerevisiae (strain ATCC 204508 / S288c) (Baker's yeast).